Reading from the N-terminus, the 368-residue chain is Chaperone protein DnaJ (368 aa).

One can recognise a J domain in the interval 5-70 (DYYQVLGVPR…KKRKLYDTHG (66 aa)). A CR-type zinc finger spans residues 124–201 (GVERQIQIPT…CNGAGRVEDH (78 aa)). 8 residues coordinate Zn(2+): C137, C140, C153, C156, C175, C178, C189, and C192. CXXCXGXG motif repeat units follow at residues 137–144 (CTHCHGSG), 153–160 (CGTCRGSG), 175–182 (CPHCGGRG), and 189–196 (CKVCNGAG).

It belongs to the DnaJ family. As to quaternary structure, homodimer. Requires Zn(2+) as cofactor.

The protein resides in the cytoplasm. In terms of biological role, participates actively in the response to hyperosmotic and heat shock by preventing the aggregation of stress-denatured proteins and by disaggregating proteins, also in an autonomous, DnaK-independent fashion. Unfolded proteins bind initially to DnaJ; upon interaction with the DnaJ-bound protein, DnaK hydrolyzes its bound ATP, resulting in the formation of a stable complex. GrpE releases ADP from DnaK; ATP binding to DnaK triggers the release of the substrate protein, thus completing the reaction cycle. Several rounds of ATP-dependent interactions between DnaJ, DnaK and GrpE are required for fully efficient folding. Also involved, together with DnaK and GrpE, in the DNA replication of plasmids through activation of initiation proteins. The protein is Chaperone protein DnaJ of Xylella fastidiosa (strain 9a5c).